The chain runs to 141 residues: UPF0310 protein SSA_0254 (141 aa).

Belongs to the UPF0310 family.

In Streptococcus sanguinis (strain SK36), this protein is UPF0310 protein SSA_0254.